A 163-amino-acid polypeptide reads, in one-letter code: Photosystem II extrinsic protein V (163 aa).

Residues 1-26 (MFRRLIGVVVATVLLSFQLLVGSATA) form the signal peptide. Positions 63, 66, 67, and 118 each coordinate heme c.

Belongs to the cytochrome c family. PsbV subfamily. In terms of assembly, PSII is composed of 1 copy each of membrane proteins PsbA, PsbB, PsbC, PsbD, PsbE, PsbF, PsbH, PsbI, PsbJ, PsbK, PsbL, PsbM, PsbT, PsbX, PsbY, PsbZ, Psb30/Ycf12, peripheral proteins PsbO, CyanoQ (PsbQ), PsbU, PsbV and a large number of cofactors. It forms dimeric complexes. Requires heme c as cofactor.

It is found in the cellular thylakoid membrane. One of the extrinsic, lumenal subunits of photosystem II (PSII). PSII is a light-driven water plastoquinone oxidoreductase, using light energy to abstract electrons from H(2)O, generating a proton gradient subsequently used for ATP formation. The extrinsic proteins stabilize the structure of photosystem II oxygen-evolving complex (OEC), the ion environment of oxygen evolution and protect the OEC against heat-induced inactivation. Low-potential cytochrome c that plays a role in the OEC of PSII. The polypeptide is Photosystem II extrinsic protein V (Nostoc punctiforme (strain ATCC 29133 / PCC 73102)).